Consider the following 753-residue polypeptide: A-kinase anchor protein 200 (753 aa).

Disordered regions lie at residues 1 to 345, 462 to 482, 531 to 604, 620 to 641, and 658 to 684; these read MGKA…QIEA, VETRSSSPPPPLPKSPPPSRV, TEQE…IDPA, VEKETGSISSNVAESSSVSDEQ, and VEETTEQETSDQQVISEEAHSDNDKEN. The N-myristoyl glycine moiety is linked to residue G2. Basic and acidic residues-rich tracts occupy residues 8–38 and 59–77; these read RSIDITTDPKKVGEGDEVAGKVEKIDVDQKT and AVEKKETEEHSENDKDLTT. The segment covering 81–93 has biased composition (low complexity); the sequence is AAVAEGGDAVAET. Residues 119 to 148 form an F-actin binding region; that stretch reads KSKSKKDKVKKKWSFRSISFGKKDKQKPAK. Residues 120-132 show a composition bias toward basic residues; sequence SKSKKDKVKKKWS. S132, S135, and S137 each carry phosphoserine. The span at 139–151 shows a compositional bias: basic and acidic residues; that stretch reads GKKDKQKPAKSEE. Residues 152–181 are compositionally biased toward low complexity; that stretch reads ATSPTSGTTSPTTAEAEAAPAGDAAVAEPS. Over residues 216–227 the composition is skewed to basic and acidic residues; the sequence is EQEKQANGETEK. Residues 246 to 262 show a composition bias toward low complexity; sequence EPATVTATESNTTATEE. The interval 345 to 725 is interaction with PKA-R2; the sequence is ASSEVIETVT…AEQEGESNNK (381 aa). The span at 468–480 shows a compositional bias: pro residues; it reads SPPPPLPKSPPPS. Positions 532-544 are enriched in basic and acidic residues; the sequence is EQEKQQEEAKVDS. The span at 545–561 shows a compositional bias: low complexity; the sequence is VPETIEESSSTVVVEEV. Residues 578 to 594 are compositionally biased toward basic and acidic residues; that stretch reads DVQKPIEDQDTPDEKES. Residues 626–638 are compositionally biased toward low complexity; sequence SISSNVAESSSVS. Residues 674–684 show a composition bias toward basic and acidic residues; the sequence is EEAHSDNDKEN.

As to quaternary structure, homodimer. Interacts with Cam; interaction is calcium-dependent and is inhibited by PKC-mediated phosphorylation of Akap200. Interacts with N/Notch; the interaction stabilizes N/Notch protein levels by preventing Cbl-mediated ubiquitination and subsequent lysosomal degradation of N/Notch. Interacts with Pka-R2. Binds to F-actin; interaction is independent of myristoylation, but is inhibited by Akap200 phosphorylation and Cam binding. Isoform B: Does not bind to Pka-R2. Myristoylated; myristoylation promotes accumulation at the cell periphery. In terms of processing, phosphorylated; phosphorylation prevents binding to F-actin and Cam. As to expression, detected in the brain in both neurons and glia (including perineurial glia); specifically in the neuronal nuclei in the cortex and synaptic neuropil (at protein level). Detected in germline cells, somatic follicle cells and outer rim of the ring canals during oogenesis (at protein level). Isoform A: Detected in the adult (at protein level). Isoform B: Detected in the adult with higher levels in the head (at protein level).

The protein resides in the cytoplasm. It is found in the cytosol. The protein localises to the cell membrane. It localises to the cytoskeleton. Functionally, scaffolding protein involved in the regulation of PKA signaling and anchoring to the actin cytoskeleton integrating signals propagated by cAMP, diacylglycerol and calcium. Contributes to the maintenance and regulation of cytoskeletal structures in germline via PKA-mediated signaling. As part of ethanol response in the glia, mediates ethanol-induced structural remodeling of actin cytoskeleton and perineurial membrane topology by anchoring PKA to the membrane of perineurial glia. In specific tissues such as eye and thorax, promotes N/Notch protein stability by inhibiting Cbl-mediated ubiquitination and lysosomal degradation pathway of N/Notch in a PKA-independent way. In the circadian brain neurons evening cells (E-cells), might have a role in circadian pacemaker synchronization by playing a redundant role in signaling downstream of the G protein-couple receptor Pdfr. This Drosophila melanogaster (Fruit fly) protein is A-kinase anchor protein 200.